We begin with the raw amino-acid sequence, 163 residues long: MKVSKAIVALAALCMALLAPAAGSKELTNIDGDLNNRHLRQESAELATTPEEIGVKKDSNNPLQRRDQALVSAHRVYDPVSGLACALVGDCMACPTSEKDETFCRETGYRQELDCPRPKDPKDAALLTKPEDEREIRFKACSPADTARPGVEVVKFEVRNVLS.

Positions 1–23 are cleaved as a signal peptide; it reads MKVSKAIVALAALCMALLAPAAG. The RxLR-dEER signature appears at 37–52; that stretch reads RHLRQESAELATTPEE.

Belongs to the RxLR effector family.

Its subcellular location is the secreted. It is found in the host cell membrane. Its function is as follows. Effector that enhances P.infestans colonization of Nicotiana benthamiana leaves. This is RxLR effector protein PITG_13625 from Phytophthora infestans (strain T30-4) (Potato late blight agent).